A 339-amino-acid chain; its full sequence is Transmembrane protein 120B (339 aa).

Residues 1–77 are a coiled coil; the sequence is MSGQLERCER…ASREEAELVQ (77 aa). 6 consecutive transmembrane segments (helical) span residues 102–124, 132–152, 159–179, 187–207, 270–290, and 302–322; these read GLYL…AKFA, FKLY…FFLH, VFNF…SILI, GWWV…LTWP, FLLP…VTLF, and QVFV…LTTL.

Belongs to the TMEM120 family. As to quaternary structure, heterooligomer with TMEM120A.

It is found in the nucleus inner membrane. In terms of biological role, necessary for efficient adipogenesis. Does not show ion channel activity. In Bos taurus (Bovine), this protein is Transmembrane protein 120B (TMEM120B).